Reading from the N-terminus, the 269-residue chain is 4-hydroxy-tetrahydrodipicolinate reductase (269 aa).

NAD(+) contacts are provided by residues 13 to 18 (GASGRM) and D39. R40 lines the NADP(+) pocket. NAD(+) contacts are provided by residues 101-103 (GTT) and 125-128 (APNM). Residue H158 is the Proton donor/acceptor of the active site. Residue H159 participates in (S)-2,3,4,5-tetrahydrodipicolinate binding. The active-site Proton donor is K162. 168 to 169 (GT) contacts (S)-2,3,4,5-tetrahydrodipicolinate.

It belongs to the DapB family.

It is found in the cytoplasm. The enzyme catalyses (S)-2,3,4,5-tetrahydrodipicolinate + NAD(+) + H2O = (2S,4S)-4-hydroxy-2,3,4,5-tetrahydrodipicolinate + NADH + H(+). It catalyses the reaction (S)-2,3,4,5-tetrahydrodipicolinate + NADP(+) + H2O = (2S,4S)-4-hydroxy-2,3,4,5-tetrahydrodipicolinate + NADPH + H(+). It participates in amino-acid biosynthesis; L-lysine biosynthesis via DAP pathway; (S)-tetrahydrodipicolinate from L-aspartate: step 4/4. Functionally, catalyzes the conversion of 4-hydroxy-tetrahydrodipicolinate (HTPA) to tetrahydrodipicolinate. The protein is 4-hydroxy-tetrahydrodipicolinate reductase of Bordetella pertussis (strain Tohama I / ATCC BAA-589 / NCTC 13251).